A 672-amino-acid chain; its full sequence is Threonine--tRNA ligase (672 aa).

Residues 1 to 64 (MTELLKISLP…EGDAELALIT (64 aa)) form the TGS domain. Positions 257-566 (DHRKLGREMD…LIEHFAGRLP (310 aa)) are catalytic. 3 residues coordinate Zn(2+): C362, H413, and H543.

The protein belongs to the class-II aminoacyl-tRNA synthetase family. As to quaternary structure, homodimer. Zn(2+) serves as cofactor.

It localises to the cytoplasm. The catalysed reaction is tRNA(Thr) + L-threonine + ATP = L-threonyl-tRNA(Thr) + AMP + diphosphate + H(+). Functionally, catalyzes the attachment of threonine to tRNA(Thr) in a two-step reaction: L-threonine is first activated by ATP to form Thr-AMP and then transferred to the acceptor end of tRNA(Thr). Also edits incorrectly charged L-seryl-tRNA(Thr). The chain is Threonine--tRNA ligase from Erythrobacter litoralis (strain HTCC2594).